The primary structure comprises 81 residues: ATP synthase subunit c, chloroplastic (81 aa).

The next 2 helical transmembrane spans lie at 3-23 (PLISAASVIAAGLAVGLASIG) and 57-77 (LAFMEALTIYGLVVALALLFA).

It belongs to the ATPase C chain family. As to quaternary structure, F-type ATPases have 2 components, F(1) - the catalytic core - and F(0) - the membrane proton channel. F(1) has five subunits: alpha(3), beta(3), gamma(1), delta(1), epsilon(1). F(0) has four main subunits: a(1), b(1), b'(1) and c(10-14). The alpha and beta chains form an alternating ring which encloses part of the gamma chain. F(1) is attached to F(0) by a central stalk formed by the gamma and epsilon chains, while a peripheral stalk is formed by the delta, b and b' chains.

It is found in the plastid. It localises to the chloroplast thylakoid membrane. In terms of biological role, f(1)F(0) ATP synthase produces ATP from ADP in the presence of a proton or sodium gradient. F-type ATPases consist of two structural domains, F(1) containing the extramembraneous catalytic core and F(0) containing the membrane proton channel, linked together by a central stalk and a peripheral stalk. During catalysis, ATP synthesis in the catalytic domain of F(1) is coupled via a rotary mechanism of the central stalk subunits to proton translocation. Key component of the F(0) channel; it plays a direct role in translocation across the membrane. A homomeric c-ring of between 10-14 subunits forms the central stalk rotor element with the F(1) delta and epsilon subunits. In Acorus calamus var. americanus (American sweet flag), this protein is ATP synthase subunit c, chloroplastic.